The chain runs to 330 residues: Glycerol-3-phosphate dehydrogenase [NAD(P)+] (330 aa).

NADPH contacts are provided by Trp-11, Arg-31, His-32, and Lys-105. The sn-glycerol 3-phosphate site is built by Lys-105 and Gly-133. An NADPH-binding site is contributed by Ala-137. 5 residues coordinate sn-glycerol 3-phosphate: Lys-188, Asp-241, Ser-251, Arg-252, and Asn-253. Lys-188 functions as the Proton acceptor in the catalytic mechanism. Arg-252 contributes to the NADPH binding site. NADPH-binding residues include Leu-277 and Glu-279.

The protein belongs to the NAD-dependent glycerol-3-phosphate dehydrogenase family.

The protein localises to the cytoplasm. It catalyses the reaction sn-glycerol 3-phosphate + NAD(+) = dihydroxyacetone phosphate + NADH + H(+). The enzyme catalyses sn-glycerol 3-phosphate + NADP(+) = dihydroxyacetone phosphate + NADPH + H(+). The protein operates within membrane lipid metabolism; glycerophospholipid metabolism. Functionally, catalyzes the reduction of the glycolytic intermediate dihydroxyacetone phosphate (DHAP) to sn-glycerol 3-phosphate (G3P), the key precursor for phospholipid synthesis. The protein is Glycerol-3-phosphate dehydrogenase [NAD(P)+] of Orientia tsutsugamushi (strain Boryong) (Rickettsia tsutsugamushi).